A 256-amino-acid chain; its full sequence is Receptor expression-enhancing protein 3 (256 aa).

Transmembrane regions (helical) follow at residues 1–21 (MVSW…YPAY), 42–62 (WIVF…IAWF), and 68–88 (IKIA…SVIY). Residues 177-256 (IMDQPDGAEY…NATTYSNMES (80 aa)) are disordered. Over residues 247-256 (NATTYSNMES) the composition is skewed to polar residues.

Belongs to the DP1 family.

The protein localises to the endoplasmic reticulum membrane. Its function is as follows. Microtubule-binding protein required to ensure proper cell division and nuclear envelope reassembly by sequestering the endoplasmic reticulum away from chromosomes during mitosis. Probably acts by clearing the endoplasmic reticulum membrane from metaphase chromosomes. The sequence is that of Receptor expression-enhancing protein 3 (reep3) from Danio rerio (Zebrafish).